Reading from the N-terminus, the 191-residue chain is MTQQITLVKDKILSDNYFTLHNITYDLTRKDGEVIRHKREVYDRGNGATILLYNAKKKTVVLIRQFRVATWVNGNESGQLIETCAGLLDNDEPEVCIRKEAIEETGYEVGEVRKLFELYMSPGGVTELIHFFIAEYSDSQRANAGGGVEDEDIEVLELPFSQALEMIKTGEIRDGKTVLLLNYLQMSHLMD.

GDP-alpha-D-mannose contacts are provided by residues Y17, 38 to 40, R67, and 85 to 87; these read KRE and AGL. The Nudix hydrolase domain occupies 43–180; it reads DRGNGATILL…EIRDGKTVLL (138 aa). 3 residues coordinate Mg(2+): A85, E100, and E104. The Nudix box signature appears at 86-106; that stretch reads GLLDNDEPEVCIRKEAIEETG. GDP-alpha-D-mannose is bound by residues E104, E127, 150–151, and K176; that span reads DE. Residue E151 participates in Mg(2+) binding.

It belongs to the Nudix hydrolase family. NudK subfamily. Homodimer. It depends on Mg(2+) as a cofactor.

The catalysed reaction is GDP-alpha-D-mannose + H2O = alpha-D-mannose 1-phosphate + GMP + 2 H(+). In terms of biological role, nucleoside diphosphate sugar hydrolase that hydrolyzes GDP-mannose as its preferred substrate, yielding GMP and mannose-1-phosphate. This Escherichia coli (strain UTI89 / UPEC) protein is GDP-mannose pyrophosphatase (nudK).